A 427-amino-acid chain; its full sequence is Glutamate-1-semialdehyde 2,1-aminomutase (427 aa).

Lys265 is subject to N6-(pyridoxal phosphate)lysine.

It belongs to the class-III pyridoxal-phosphate-dependent aminotransferase family. HemL subfamily. Homodimer. It depends on pyridoxal 5'-phosphate as a cofactor.

It is found in the cytoplasm. The catalysed reaction is (S)-4-amino-5-oxopentanoate = 5-aminolevulinate. It functions in the pathway porphyrin-containing compound metabolism; protoporphyrin-IX biosynthesis; 5-aminolevulinate from L-glutamyl-tRNA(Glu): step 2/2. This Burkholderia multivorans (strain ATCC 17616 / 249) protein is Glutamate-1-semialdehyde 2,1-aminomutase.